The following is a 786-amino-acid chain: DNA double-strand break repair Rad50 ATPase (786 aa).

Residues K13, 33–39, and Q138 each bind ATP; that span reads NGSGKTT. Coiled coils occupy residues 194–249, 337–455, and 551–650; these read LKAE…LKSI, EKAK…RALE, and ALER…VKAL. The 94-residue stretch at 366–459 folds into the Zinc-hook domain; it reads EIAELQNKIN…KIRALEKYKG (94 aa). Zn(2+) contacts are provided by C411 and C414.

This sequence belongs to the SMC family. RAD50 subfamily. As to quaternary structure, homodimer. Forms a heterotetramer composed of two Mre11 subunits and two Rad50 subunits. Zn(2+) is required as a cofactor.

Functionally, part of the Rad50/Mre11 complex, which is involved in the early steps of DNA double-strand break (DSB) repair. The complex may facilitate opening of the processed DNA ends to aid in the recruitment of HerA and NurA. Rad50 controls the balance between DNA end bridging and DNA resection via ATP-dependent structural rearrangements of the Rad50/Mre11 complex. The sequence is that of DNA double-strand break repair Rad50 ATPase from Nanoarchaeum equitans (strain Kin4-M).